We begin with the raw amino-acid sequence, 300 residues long: Acetaldehyde dehydrogenase 1 (300 aa).

An NAD(+)-binding site is contributed by 11–14 (SGNI). C126 functions as the Acyl-thioester intermediate in the catalytic mechanism. NAD(+)-binding positions include 157-165 (SAGPGTRAN) and N276.

The protein belongs to the acetaldehyde dehydrogenase family.

The enzyme catalyses acetaldehyde + NAD(+) + CoA = acetyl-CoA + NADH + H(+). This Rhodococcus erythropolis (strain PR4 / NBRC 100887) protein is Acetaldehyde dehydrogenase 1.